A 139-amino-acid chain; its full sequence is Nucleoside diphosphate kinase (139 aa).

ATP is bound by residues lysine 10, phenylalanine 58, arginine 86, threonine 92, arginine 103, and asparagine 113. Catalysis depends on histidine 116, which acts as the Pros-phosphohistidine intermediate.

It belongs to the NDK family. Homotetramer. It depends on Mg(2+) as a cofactor.

Its subcellular location is the cytoplasm. The enzyme catalyses a 2'-deoxyribonucleoside 5'-diphosphate + ATP = a 2'-deoxyribonucleoside 5'-triphosphate + ADP. It catalyses the reaction a ribonucleoside 5'-diphosphate + ATP = a ribonucleoside 5'-triphosphate + ADP. Functionally, major role in the synthesis of nucleoside triphosphates other than ATP. The ATP gamma phosphate is transferred to the NDP beta phosphate via a ping-pong mechanism, using a phosphorylated active-site intermediate. The protein is Nucleoside diphosphate kinase of Nitratidesulfovibrio vulgaris (strain DSM 19637 / Miyazaki F) (Desulfovibrio vulgaris).